The primary structure comprises 629 residues: Flap endonuclease GEN-like 1 (629 aa).

An N-domain region spans residues 1 to 87 (MGVGGSFWDL…DGQPSPLKSQ (87 aa)). Positions 2–98 (GVGGSFWDLL…RAARFFRGSG (97 aa)) are XPG-N domain. The Mg(2+) site is built by D31, D78, E148, E150, D169, D171, and D221. The interval 136–221 (EYLGMPVLRA…VAMALLVGSD (86 aa)) is XPG-I domain. Residues 136–225 (EYLGMPVLRA…LLVGSDHDLH (90 aa)) form an I-domain region. A 5'-3' exonuclease domain region spans residues 221–421 (DHDLHGVPGF…MLPMLSTIYL (201 aa)). Residues 594-617 (KKGLSGDSGKDGSRKSSDVDLSKN) form a disordered region. The span at 601–614 (SGKDGSRKSSDVDL) shows a compositional bias: basic and acidic residues.

This sequence belongs to the XPG/RAD2 endonuclease family. GEN subfamily. In terms of assembly, monomer. Interacts with PCNA. PCNA stimulates the nuclease activity without altering cleavage specificity. Requires Mg(2+) as cofactor. Highly expressed in anthers. Expressed in roots and leaves.

It is found in the nucleus. Functionally, endonuclease which cleaves flap structures at the junction between single-stranded DNA and double-stranded DNA. Possesses both single-stranded and double-stranded DNA-binding activities. Involved in early microspore development, but does not alter meiosis or tapetal cells development. Possesses Holliday junction (HJ) resolvase activity in vitro. Cleaves HJ at symmetrically related sites of the branch point. In Oryza sativa subsp. japonica (Rice), this protein is Flap endonuclease GEN-like 1.